Reading from the N-terminus, the 105-residue chain is Urease subunit beta (105 aa).

It belongs to the urease beta subunit family. In terms of assembly, heterotrimer of UreA (gamma), UreB (beta) and UreC (alpha) subunits. Three heterotrimers associate to form the active enzyme.

It is found in the cytoplasm. The enzyme catalyses urea + 2 H2O + H(+) = hydrogencarbonate + 2 NH4(+). Its pathway is nitrogen metabolism; urea degradation; CO(2) and NH(3) from urea (urease route): step 1/1. This is Urease subunit beta from Pseudomonas putida (strain GB-1).